We begin with the raw amino-acid sequence, 269 residues long: Triosephosphate isomerase (269 aa).

Residue 8–10 coordinates substrate; the sequence is NWK. Histidine 105 (electrophile) is an active-site residue. The active-site Proton acceptor is glutamate 183. Substrate is bound by residues glycine 189, serine 227, and 248-249; that span reads GG.

It belongs to the triosephosphate isomerase family. Homodimer.

The protein resides in the cytoplasm. The enzyme catalyses D-glyceraldehyde 3-phosphate = dihydroxyacetone phosphate. It participates in carbohydrate biosynthesis; gluconeogenesis. It functions in the pathway carbohydrate degradation; glycolysis; D-glyceraldehyde 3-phosphate from glycerone phosphate: step 1/1. Its function is as follows. Involved in the gluconeogenesis. Catalyzes stereospecifically the conversion of dihydroxyacetone phosphate (DHAP) to D-glyceraldehyde-3-phosphate (G3P). This chain is Triosephosphate isomerase, found in Psychrobacter cryohalolentis (strain ATCC BAA-1226 / DSM 17306 / VKM B-2378 / K5).